A 200-amino-acid chain; its full sequence is Probable GTP-binding protein EngB (200 aa).

Positions 30–199 constitute an EngB-type G domain; sequence KKAEVAIAGR…EDYIYENWIK (170 aa). Residues 38 to 45, 64 to 68, 82 to 85, 149 to 152, and 178 to 180 contribute to the GTP site; these read GRSNAGKS, GKTRL, DMPG, TKAD, and VSA. Residues Ser-45 and Thr-66 each coordinate Mg(2+).

This sequence belongs to the TRAFAC class TrmE-Era-EngA-EngB-Septin-like GTPase superfamily. EngB GTPase family. Mg(2+) serves as cofactor.

Its function is as follows. Necessary for normal cell division and for the maintenance of normal septation. This Bdellovibrio bacteriovorus (strain ATCC 15356 / DSM 50701 / NCIMB 9529 / HD100) protein is Probable GTP-binding protein EngB.